Consider the following 384-residue polypeptide: Mannitol-1-phosphate 5-dehydrogenase (384 aa).

Position 3 to 14 (3 to 14) interacts with NAD(+); sequence ALHFGAGNIGRG.

Belongs to the mannitol dehydrogenase family.

It catalyses the reaction D-mannitol 1-phosphate + NAD(+) = beta-D-fructose 6-phosphate + NADH + H(+). In Clostridium acetobutylicum (strain ATCC 824 / DSM 792 / JCM 1419 / IAM 19013 / LMG 5710 / NBRC 13948 / NRRL B-527 / VKM B-1787 / 2291 / W), this protein is Mannitol-1-phosphate 5-dehydrogenase (mtlD).